A 92-amino-acid chain; its full sequence is RNA-binding protein Hfq (92 aa).

The Sm domain maps to 9–68 (DPFLNALRRERVPVSVYLVNGIKLQGTIESFDQFVVLLRNTVSQMVYKHAISTVVPARNV).

This sequence belongs to the Hfq family. As to quaternary structure, homohexamer.

RNA chaperone that binds small regulatory RNA (sRNAs) and mRNAs to facilitate mRNA translational regulation in response to envelope stress, environmental stress and changes in metabolite concentrations. Also binds with high specificity to tRNAs. The chain is RNA-binding protein Hfq from Xylella fastidiosa (strain M12).